The sequence spans 624 residues: Methyl-accepting chemotaxis protein McpG (624 aa).

A helical membrane pass occupies residues isoleucine 11–aspartate 31. One can recognise a Cache domain in the interval asparagine 36–glycine 254. The chain crosses the membrane as a helical span at residues serine 272 to isoleucine 292. One can recognise an HAMP domain in the interval arginine 293 to arginine 347. In terms of domain architecture, Methyl-accepting transducer spans alanine 352 to asparagine 588.

This sequence belongs to the methyl-accepting chemotaxis (MCP) protein family.

It localises to the cell membrane. In terms of biological role, chemotactic-signal transducers respond to changes in the concentration of attractants and repellents in the environment, transduce a signal from the outside to the inside of the cell, and facilitate sensory adaptation through the variation of the level of methylation. McpG is a specific gamma-aminobutyric acid (GABA) chemoreceptor that recognizes GABA over a wide range of environmental conditions. Contributes to attraction to and colonization of plant roots. The chain is Methyl-accepting chemotaxis protein McpG from Pseudomonas putida (strain ATCC 47054 / DSM 6125 / CFBP 8728 / NCIMB 11950 / KT2440).